We begin with the raw amino-acid sequence, 206 residues long: ATP-dependent Clp protease proteolytic subunit 1 (206 aa).

S106 serves as the catalytic Nucleophile. H131 is an active-site residue.

The protein belongs to the peptidase S14 family. In terms of assembly, fourteen ClpP subunits assemble into 2 heptameric rings which stack back to back to give a disk-like structure with a central cavity, resembling the structure of eukaryotic proteasomes.

It localises to the cytoplasm. It catalyses the reaction Hydrolysis of proteins to small peptides in the presence of ATP and magnesium. alpha-casein is the usual test substrate. In the absence of ATP, only oligopeptides shorter than five residues are hydrolyzed (such as succinyl-Leu-Tyr-|-NHMec, and Leu-Tyr-Leu-|-Tyr-Trp, in which cleavage of the -Tyr-|-Leu- and -Tyr-|-Trp bonds also occurs).. Cleaves peptides in various proteins in a process that requires ATP hydrolysis. Has a chymotrypsin-like activity. Plays a major role in the degradation of misfolded proteins. This chain is ATP-dependent Clp protease proteolytic subunit 1, found in Methylococcus capsulatus (strain ATCC 33009 / NCIMB 11132 / Bath).